Consider the following 360-residue polypeptide: MTTTLQQRESASLWEQFCQWVTSTNNRIYVGWFGTLMIPTLLTATTCFIIAFIAAPPVDIDGIREPVAGSLLYGNNIISGAVVPSSNAIGLHFYPIWEAASLDEWLYNGGPYQLVVFHFLIGIFCYMGRQWELSYRLGMRPWICVAYSAPVSAATAVFLIYPIGQGSFSDGMPLGISGTFNFMIVFQAEHNILMHPFHMLGVAGVFGGSLFSAMHGSLVTSSLVRETTEVESQNYGYKFGQEEETYNIVAAHGYFGRLIFQYASFNNSRSLHFFLGAWPVIGIWFTAMGVSTMAFNLNGFNFNQSILDSQGRVIGTWADVLNRANIGFEVMHERNAHNFPLDLASGEQAPVALTAPAVNG.

At 1–31 (MTTTLQQRESASLWEQFCQWVTSTNNRIYVG) the chain is on the cytoplasmic side. A helical membrane pass occupies residues 32-53 (WFGTLMIPTLLTATTCFIIAFI). Topologically, residues 54-110 (AAPPVDIDGIREPVAGSLLYGNNIISGAVVPSSNAIGLHFYPIWEAASLDEWLYNGG) are lumenal, thylakoid. The helical transmembrane segment at 111-134 (PYQLVVFHFLIGIFCYMGRQWELS) threads the bilayer. Histidine 118 is a chlorophyll a binding site. A pheophytin a-binding site is contributed by tyrosine 126. The Cytoplasmic segment spans residues 135–142 (YRLGMRPW). Residues 143–161 (ICVAYSAPVSAATAVFLIY) traverse the membrane as a helical segment. A pheophytin a-binding site is contributed by tyrosine 147. Over 162–191 (PIGQGSFSDGMPLGISGTFNFMIVFQAEHN) the chain is Lumenal, thylakoid. Aspartate 170 and glutamate 189 together coordinate [CaMn4O5] cluster. The helical transmembrane segment at 192-218 (ILMHPFHMLGVAGVFGGSLFSAMHGSL) threads the bilayer. Histidine 198 serves as a coordination point for chlorophyll a. A quinone contacts are provided by histidine 215, serine 264, and phenylalanine 265. Histidine 215 lines the Fe cation pocket. The Cytoplasmic portion of the chain corresponds to 219–270 (VTSSLVRETTEVESQNYGYKFGQEEETYNIVAAHGYFGRLIFQYASFNNSRS). A helical membrane pass occupies residues 271–295 (LHFFLGAWPVIGIWFTAMGVSTMAF). Fe cation is bound at residue histidine 272. The Lumenal, thylakoid portion of the chain corresponds to 296-360 (NLNGFNFNQS…VALTAPAVNG (65 aa)). Residues histidine 332, glutamate 333, histidine 337, aspartate 342, and alanine 344 each contribute to the [CaMn4O5] cluster site. The propeptide occupies 345–360 (SGEQAPVALTAPAVNG).

The protein belongs to the reaction center PufL/M/PsbA/D family. PSII is composed of 1 copy each of membrane proteins PsbA, PsbB, PsbC, PsbD, PsbE, PsbF, PsbH, PsbI, PsbJ, PsbK, PsbL, PsbM, PsbT, PsbX, PsbY, PsbZ, Psb30/Ycf12, peripheral proteins PsbO, CyanoQ (PsbQ), PsbU, PsbV and a large number of cofactors. It forms dimeric complexes. The D1/D2 heterodimer binds P680, chlorophylls that are the primary electron donor of PSII, and subsequent electron acceptors. It shares a non-heme iron and each subunit binds pheophytin, quinone, additional chlorophylls, carotenoids and lipids. D1 provides most of the ligands for the Mn4-Ca-O5 cluster of the oxygen-evolving complex (OEC). There is also a Cl(-1) ion associated with D1 and D2, which is required for oxygen evolution. The PSII complex binds additional chlorophylls, carotenoids and specific lipids. serves as cofactor. Post-translationally, C-terminally processed by CtpA; processing is essential to allow assembly of the oxygen-evolving complex and photosynthetic growth. In terms of processing, tyr-161 forms a radical intermediate that is referred to as redox-active TyrZ, YZ or Y-Z.

It localises to the cellular thylakoid membrane. The catalysed reaction is 2 a plastoquinone + 4 hnu + 2 H2O = 2 a plastoquinol + O2. In terms of biological role, photosystem II (PSII) is a light-driven water:plastoquinone oxidoreductase that uses light energy to abstract electrons from H(2)O, generating O(2) and a proton gradient subsequently used for ATP formation. It consists of a core antenna complex that captures photons, and an electron transfer chain that converts photonic excitation into a charge separation. The D1/D2 (PsbA/PsbD) reaction center heterodimer binds P680, the primary electron donor of PSII as well as several subsequent electron acceptors. The polypeptide is Photosystem II protein D1 2 (Synechocystis sp. (strain ATCC 27184 / PCC 6803 / Kazusa)).